We begin with the raw amino-acid sequence, 631 residues long: Chaperone protein HtpG (631 aa).

An a; substrate-binding region spans residues 1 to 342 (MSEQTANKET…SNDLPLNVSR (342 aa)). A b region spans residues 343–559 (EILQDNKVTQ…DFEMGTQMAK (217 aa)). Residues 560–631 (LLEAAGQAAP…LSAMNQLLAK (72 aa)) form a c region.

It belongs to the heat shock protein 90 family. As to quaternary structure, homodimer.

The protein localises to the cytoplasm. Functionally, molecular chaperone. Has ATPase activity. The sequence is that of Chaperone protein HtpG from Aliivibrio fischeri (strain ATCC 700601 / ES114) (Vibrio fischeri).